The chain runs to 288 residues: Single myb histone 4 (288 aa).

3 disordered regions span residues 1-42 (MGAP…PVLS), 62-87 (GLGSSKLRVPKITGPSSSPSSSSQPL), and 181-206 (DSLATRTPAPMNASAPKQKDPSKPSK). One can recognise an HTH myb-type domain in the interval 1–60 (MGAPKQKWTSEEEDALRAGVRKHGAGKWRTIQKDPEFSPVLSSRSNIDLKDKWRNLSFSA). The segment at residues 28-56 (WRTIQKDPEFSPVLSSRSNIDLKDKWRNL) is a DNA-binding region (H-T-H motif). The segment covering 76–87 (PSSSPSSSSQPL) has biased composition (low complexity). The region spanning 113 to 181 (TLPKYGAMIM…KIDKSYRLPD (69 aa)) is the H15 domain. Residues 230 to 250 (KVADAEAKAHDAHDQTMEAER) adopt a coiled-coil conformation.

The protein belongs to the histone H1/H5 family. SMH subfamily. Forms a homodimer and heterodimers.

The protein localises to the nucleus. It localises to the chromosome. The protein resides in the nucleolus. It is found in the telomere. Binds preferentially double-stranded telomeric repeats, but may also bind to the single telomeric strand. This is Single myb histone 4 (SMH4) from Zea mays (Maize).